A 718-amino-acid polypeptide reads, in one-letter code: Quinolinate synthase, chloroplastic (718 aa).

A compositionally biased stretch (low complexity) spans 1 to 22 (MALALSVAPTSSSLSSLLSRTP). The interval 1 to 29 (MALALSVAPTSSSLSSLLSRTPNPSPNFR) is disordered. The transit peptide at 1–70 (MALALSVAPT…VNASPFSISA (70 aa)) directs the protein to the chloroplast. The Cysteine persulfide intermediate role is filled by C132. H280 and S306 together coordinate iminosuccinate. C360 is a binding site for [4Fe-4S] cluster. Residues 389–391 (YIN) and S411 each bind iminosuccinate. C484 contacts [4Fe-4S] cluster. Iminosuccinate-binding positions include 510–512 (HLE) and T535. Residue C640 coordinates [4Fe-4S] cluster.

This sequence belongs to the quinolinate synthase family. Type 1 subfamily. Homodimer. Interacts in vitro with NFS2, CpNIFS3 and AO. Part of a Cys defulfurase complex. [4Fe-4S] cluster serves as cofactor. In terms of tissue distribution, expressed in roots, leaves, stems and flowers.

It localises to the plastid. It is found in the chloroplast. It catalyses the reaction iminosuccinate + dihydroxyacetone phosphate = quinolinate + phosphate + 2 H2O + H(+). It participates in cofactor biosynthesis; NAD(+) biosynthesis; quinolinate from iminoaspartate: step 1/1. Catalyzes the condensation of iminoaspartate with dihydroxyacetone phosphate to form quinolinate. Can complement nadA-deficient E.coli mutant. Essential for the de novo synthesis of NAD. Also participates in cysteine desulfurization mediated by NFS2. Can activate the cysteine desulfurase activity of NFS2 in vitro. The polypeptide is Quinolinate synthase, chloroplastic (Arabidopsis thaliana (Mouse-ear cress)).